Here is a 1150-residue protein sequence, read N- to C-terminus: Apomucin (1150 aa).

2 stretches are compositionally biased toward low complexity: residues 1–36 (ETAR…TGAS) and 46–79 (SVAG…SSVG). Tandem repeats lie at residues 1–44 (ETAR…ETSR), 45–125 (ISVA…ETSR), 126–206 (ISVA…ETSR), 207–287 (ISVA…ETSR), and 288–368 (ISVA…ETSR). Residues 1-368 (ETARPSVAGS…ASIGQPETSR (368 aa)) are 6 X 81 AA tandem repeats. 2 disordered regions span residues 1–730 (ETAR…KTGI) and 776–925 (APGS…PAPL). O-linked (GalNAc...) serine; partial glycosylation is found at S46, S50, S51, S57, S58, and S61. Residue T66 is glycosylated (O-linked (GalNAc...) threonine; partial). S67 is a glycosylation site (O-linked (GalNAc...) serine; partial). T73 and T74 each carry an O-linked (GalNAc...) threonine; partial glycan. S76 and S77 each carry an O-linked (GalNAc...) serine; partial glycan. O-linked (GalNAc...) threonine; partial glycans are attached at residues T81 and T83. Low complexity predominate over residues 86 to 117 (PSVAGSGTTGTVSGASGSTGSSSGSPGATGAS). 2 O-linked (GalNAc...) serine; partial glycosylation sites follow: S87 and S91. T93, T94, and T96 each carry an O-linked (GalNAc...) threonine; partial glycan. Residues S98, S101, and S103 are each glycosylated (O-linked (GalNAc...) serine; partial). T104 carries an O-linked (GalNAc...) threonine; partial glycan. 4 O-linked (GalNAc...) serine; partial glycosylation sites follow: S106, S107, S108, and S110. Residue T114 is glycosylated (O-linked (GalNAc...) threonine; partial). Residue S117 is glycosylated (O-linked (GalNAc...) serine; partial). T123 carries an O-linked (GalNAc...) threonine; partial glycan. The O-linked (GalNAc...) serine; partial glycan is linked to S124. 7 stretches are compositionally biased toward low complexity: residues 127-160 (SVAG…SSVG), 167-198 (PSVA…TGAS), 208-241 (SVAG…SSVG), 248-279 (PSVA…TGAS), 289-322 (SVAG…SSVG), 329-360 (PSVA…TGAS), and 370-396 (SVAG…ATTS). The stretch at 369-391 (ISVAGSSGAPAVSSGASQAAGTS) is one 6; truncated repeat. An N-linked (GlcNAc...) asparagine glycan is attached at N418. Polar residues predominate over residues 442–459 (SYNTEATTSIGRSGTTHT). The span at 473–506 (SHSSQSSKPGSSVTTPGSPESGSETGTSGEFSTT) shows a compositional bias: low complexity. 2 stretches are compositionally biased toward polar residues: residues 507–517 (VISGSSHTEAT) and 537–547 (ELSGTTIASGN). The N-linked (GlcNAc...) asparagine glycan is linked to N547. The segment covering 548–558 (ATTEATTSTET) has biased composition (low complexity). Polar residues predominate over residues 564–586 (TGAQTTVPGSQVSGSETGTSEAV). Low complexity predominate over residues 590–625 (AIASGSSSTGTTSGASDSQVTGSRTGTTGVVLGTTV). Polar residues-rich tracts occupy residues 626 to 635 (APGSSSTGAT) and 643 to 661 (GTRS…TTYE). Gly residues predominate over residues 671–682 (GGSGTPGSGINT). 3 stretches are compositionally biased toward polar residues: residues 688–697 (QVTGIQTGTT), 706–729 (LPGS…SKTG), and 779–788 (SFNTKATTPT). Residues 790–833 (VRAATGAGTAVGATSRSTGISTGPENSTPGTTETGSGTTSSPGG) show a composition bias toward low complexity. A compositionally biased stretch (polar residues) spans 875–908 (ETTTAPRISATGSTSVSKEITASPKVSSPETTAG). 4 N-linked (GlcNAc...) asparagine glycosylation sites follow: N917, N985, N1002, and N1068. The VWFC domain occupies 929–995 (PVCHGPLGEE…DTCCEIGHCE (67 aa)). Cystine bridges form between C1062–C1109, C1076–C1123, C1085–C1139, and C1089–C1141. In terms of domain architecture, CTCK spans 1062–1146 (CKPSPVNVTV…TACSCLDPCQ (85 aa)).

In terms of assembly, intermolecular disulfide bonds could help maintain a multimeric mucin structure. Post-translationally, extensively O-glycosylated on most but not all Ser and Thr residues of the repeat units. Highest glycosylation appears to occur on Ser residues which have Gly at positions at +2 or -2 from the glycosylation site or, where Gly is the penultimate residue. The presence of proline (usually at position +3 or -3) appears to also enhance glycosylation. Submaxillary mucosae.

It is found in the secreted. In terms of biological role, apomucin is part of mucin, the major glycoprotein synthesized and secreted by mucous cells of the submaxillary gland. Its highly viscous aqueous solutions serve to lubricate the oral cavity and to protect it from the external environment. This chain is Apomucin, found in Sus scrofa (Pig).